The sequence spans 228 residues: MLHVEMLTLLFLVLWMCVFSQDPGSKVVADRYAVYWNSSNPRFQRGDYHIDVCINDYLDVFCPHYEDSVPEDKTERYVLYMVNFDGYSACDHTSKGFKRWECNRPHSPNGPLKFSEKFQLFTPFSLGFEFRPGREYFYISSAIPDNGRRSCLKLKVFVRPTNSCMKTIGVHDRVFDVNDKVENSLEPADDTVHESAEPSRGENAAQTPRIPSRLLAILLFLLAMLLTL.

An N-terminal signal peptide occupies residues 1 to 20; that stretch reads MLHVEMLTLLFLVLWMCVFS. Residues 29–162 form the Ephrin RBD domain; it reads ADRYAVYWNS…KLKVFVRPTN (134 aa). N37 carries an N-linked (GlcNAc...) asparagine glycan. 2 disulfide bridges follow: C62/C102 and C90/C151. A glycan (N-linked (GlcNAc...) asparagine; atypical) is linked at N162. The segment at 186 to 205 is disordered; the sequence is EPADDTVHESAEPSRGENAA. Positions 190–200 are enriched in basic and acidic residues; the sequence is DTVHESAEPSR. Residue N203 is the site of GPI-anchor amidated asparagine attachment. The propeptide at 204 to 228 is removed in mature form; that stretch reads AAQTPRIPSRLLAILLFLLAMLLTL.

It belongs to the ephrin family. In terms of assembly, binds to the receptor tyrosine kinases EPHA2, EPHA3 and EPHB1. Forms a ternary EFNA5-EPHA3-ADAM10 complex mediating EFNA5 extracellular domain shedding by ADAM10 which regulates the EFNA5-EPHA3 complex internalization and function. Binds to EPHB2. Interacts with EPHA8; activates EPHA8. In terms of tissue distribution, expressed in myogenic progenitor cells.

Its subcellular location is the cell membrane. The protein resides in the membrane. It is found in the caveola. Cell surface GPI-bound ligand for Eph receptors, a family of receptor tyrosine kinases which are crucial for migration, repulsion and adhesion during neuronal, vascular and epithelial development. Binds promiscuously Eph receptors residing on adjacent cells, leading to contact-dependent bidirectional signaling into neighboring cells. The signaling pathway downstream of the receptor is referred to as forward signaling while the signaling pathway downstream of the ephrin ligand is referred to as reverse signaling. Induces compartmentalized signaling within a caveolae-like membrane microdomain when bound to the extracellular domain of its cognate receptor. This signaling event requires the activity of the Fyn tyrosine kinase. Activates the EPHA3 receptor to regulate cell-cell adhesion and cytoskeletal organization. With the receptor EPHA2 may regulate lens fiber cells shape and interactions and be important for lens transparency maintenance. May function actively to stimulate axon fasciculation. The interaction of EFNA5 with EPHA5 also mediates communication between pancreatic islet cells to regulate glucose-stimulated insulin secretion. Cognate/functional ligand for EPHA7, their interaction regulates brain development modulating cell-cell adhesion and repulsion. In Mus musculus (Mouse), this protein is Ephrin-A5 (Efna5).